Reading from the N-terminus, the 156-residue chain is Cyanate hydratase (156 aa).

Catalysis depends on residues Arg-96, Glu-99, and Ser-122.

The protein belongs to the cyanase family.

The catalysed reaction is cyanate + hydrogencarbonate + 3 H(+) = NH4(+) + 2 CO2. Its function is as follows. Catalyzes the reaction of cyanate with bicarbonate to produce ammonia and carbon dioxide. This chain is Cyanate hydratase, found in Burkholderia lata (strain ATCC 17760 / DSM 23089 / LMG 22485 / NCIMB 9086 / R18194 / 383).